The chain runs to 106 residues: Nucleoid-associated protein PD_1058 (106 aa).

The protein belongs to the YbaB/EbfC family. Homodimer.

It localises to the cytoplasm. Its subcellular location is the nucleoid. Its function is as follows. Binds to DNA and alters its conformation. May be involved in regulation of gene expression, nucleoid organization and DNA protection. This Xylella fastidiosa (strain Temecula1 / ATCC 700964) protein is Nucleoid-associated protein PD_1058.